The sequence spans 233 residues: ATP synthase subunit a, chloroplastic (233 aa).

Helical transmembrane passes span 27 to 47 (VLLI…LGTL), 84 to 104 (VPFV…GALI), 122 to 142 (DINT…YAGF), and 192 to 212 (VLCL…GIFA).

Belongs to the ATPase A chain family. As to quaternary structure, F-type ATPases have 2 components, CF(1) - the catalytic core - and CF(0) - the membrane proton channel. CF(1) has five subunits: alpha(3), beta(3), gamma(1), delta(1), epsilon(1). CF(0) has four main subunits: a, b, b' and c.

The protein resides in the plastid. Its subcellular location is the chloroplast thylakoid membrane. Its function is as follows. Key component of the proton channel; it plays a direct role in the translocation of protons across the membrane. The sequence is that of ATP synthase subunit a, chloroplastic from Ochrosphaera neapolitana.